A 456-amino-acid polypeptide reads, in one-letter code: Bifunctional protein GlmU (456 aa).

The interval 1-229 is pyrophosphorylase; it reads MTKKALSAVI…VMEVEGANNR (229 aa). UDP-N-acetyl-alpha-D-glucosamine contacts are provided by residues 11–14, Lys25, Gln76, 81–82, 103–105, Gly140, Glu154, Asn169, and Asn227; these read LAAG, GT, and YGD. Asp105 contributes to the Mg(2+) binding site. Asn227 lines the Mg(2+) pocket. Residues 230 to 250 are linker; the sequence is LQLAALERYLQNKQASKLLLE. Residues 251 to 456 form an N-acetyltransferase region; the sequence is GVMIYDPARF…QGWQRPIKKK (206 aa). Positions 333 and 351 each coordinate UDP-N-acetyl-alpha-D-glucosamine. Residue His363 is the Proton acceptor of the active site. UDP-N-acetyl-alpha-D-glucosamine is bound by residues Tyr366 and Asn377. Acetyl-CoA contacts are provided by residues Ala380, 386-387, Ser405, Ala423, and Arg440; that span reads NY.

It in the N-terminal section; belongs to the N-acetylglucosamine-1-phosphate uridyltransferase family. In the C-terminal section; belongs to the transferase hexapeptide repeat family. As to quaternary structure, homotrimer. Mg(2+) serves as cofactor.

It localises to the cytoplasm. It carries out the reaction alpha-D-glucosamine 1-phosphate + acetyl-CoA = N-acetyl-alpha-D-glucosamine 1-phosphate + CoA + H(+). The enzyme catalyses N-acetyl-alpha-D-glucosamine 1-phosphate + UTP + H(+) = UDP-N-acetyl-alpha-D-glucosamine + diphosphate. It functions in the pathway nucleotide-sugar biosynthesis; UDP-N-acetyl-alpha-D-glucosamine biosynthesis; N-acetyl-alpha-D-glucosamine 1-phosphate from alpha-D-glucosamine 6-phosphate (route II): step 2/2. It participates in nucleotide-sugar biosynthesis; UDP-N-acetyl-alpha-D-glucosamine biosynthesis; UDP-N-acetyl-alpha-D-glucosamine from N-acetyl-alpha-D-glucosamine 1-phosphate: step 1/1. The protein operates within bacterial outer membrane biogenesis; LPS lipid A biosynthesis. Functionally, catalyzes the last two sequential reactions in the de novo biosynthetic pathway for UDP-N-acetylglucosamine (UDP-GlcNAc). The C-terminal domain catalyzes the transfer of acetyl group from acetyl coenzyme A to glucosamine-1-phosphate (GlcN-1-P) to produce N-acetylglucosamine-1-phosphate (GlcNAc-1-P), which is converted into UDP-GlcNAc by the transfer of uridine 5-monophosphate (from uridine 5-triphosphate), a reaction catalyzed by the N-terminal domain. In Haemophilus influenzae (strain PittEE), this protein is Bifunctional protein GlmU.